Consider the following 162-residue polypeptide: Interleukin-15 (162 aa).

The signal sequence occupies residues 1–29 (MRISKPHLRSVSIQCYLCLLLNSHFLTEA). Positions 30–48 (GIHVFILGCFSAGLPKTEA) are excised as a propeptide. Intrachain disulfides connect cysteine 83–cysteine 133 and cysteine 90–cysteine 136. Asparagine 127 carries an N-linked (GlcNAc...) asparagine glycan.

Belongs to the IL-15/IL-21 family.

It localises to the secreted. Its function is as follows. Cytokine that plays a major role in the development of inflammatory and protective immune responses to microbial invaders and parasites by modulating immune cells of both the innate and adaptive immune systems. Stimulates the proliferation of natural killer cells, T-cells and B-cells and promotes the secretion of several cytokines. In monocytes, induces the production of IL8 and monocyte chemotactic protein 1/CCL2, two chemokines that attract neutrophils and monocytes respectively to sites of infection. Unlike most cytokines, which are secreted in soluble form, IL15 is expressed in association with its high affinity IL15RA on the surface of IL15-producing cells and delivers signals to target cells that express IL2RB and IL2RG receptor subunits. Binding to its receptor triggers the phosphorylation of JAK1 and JAK3 and the recruitment and subsequent phosphorylation of signal transducer and activator of transcription-3/STAT3 and STAT5. In mast cells, induces the rapid tyrosine phosphorylation of STAT6 and thereby controls mast cell survival and release of cytokines such as IL4. The sequence is that of Interleukin-15 (IL15) from Macaca mulatta (Rhesus macaque).